We begin with the raw amino-acid sequence, 1993 residues long: MALIVHLKTVSELRGRADRIAKVTFRGQSFYSRVLENCEDVADFDETFRWPVASSIDRNEVLEIQIFNYSKVFSNKLIGTFRMVLQKVVEENRVEVSDTLIDDNNAIIKTSLSMEVRYQAADGTVGPWDDGDFLGDESLQEEEKDSQETDGLLPGSRPSTRTPGEKSFRSKGKEKTKGGRDGEHKAGRSVFSAMKLGKTRSHKEEPQRQDEPAVLEMEDLDHLAIRLGDGLDPDSVSLASVTALTSNVSNKRSKPDIKMEPSAGRPMDYQVSITVIEARQLVGLNMDPVVCVEVGDDKKYTSMKESTNCPYYNEYFVFDFHVSPDVMFDKIIKISVIHSKNLLRSGTLVGSFKMDVGTVYSQPEHQFHHKWAILSDPDDISAGLKGYVKCDVAVVGKGDNIKTPHKANETDEDDIEGNLLLPEGVPPERQWARFYVKIYRAEGLPRMNTSLMANVKKAFIGENKDLVDPYVQVFFAGQKGKTSVQKSSYEPLWNEQVVFTDLFPPLCKRMKVQIRDSDKVNDVAIGTHFIDLRKISNDGDKGFLPTLGPAWVNMYGSTRNYTLLDEHQDLNEGLGEGVSFRARLMLGLAVEILDTSNPELTSSTEVQVEQATPVSESCTGRMEEFFLFGAFLEASMIDRKNGDKPVTFEVTIGNYGNEVDGTSRPQRPRPRKEPGDEEEVDLIQNSSDDEGDEAGDLASVSSTPPMRPQITDRNYFHLPYLERKPCIYIKSWWPDQRRRLYNANIMDHIADKLEEGLNDVQEMIKTEKSYPERRLRGVLEELSCGCHRFLSLSDKDQGHSSRTRLDRERLKSCMRELESMGQQAKSLRAQVKRHTVRDKLRLCQNFLQKLRFLADEPQHSIPDVFIWMMSNNKRIAYARVPSKDLLFSIVEEELGKDCAKVKTLFLKLPGKRGFGSAGWTVQAKLELYLWLGLSKQRKDFLCGLPCGFEEVKAAQGLGLHSFPPISLVYTKKQTFQLRAHMYQARSLFAADSTGLSDPFARVFFINQSQCTEVLNETLCPTWDQMLVFDNLELYGEAHELRDDPPIIVIEIYDQDSMGKADFMGRTFAKPLVKMADEAYCPPRFPPQLEYYQIYRGNATAGDLLAAFELLQIGPSGKADLPPINGPVDMDRGPIMPVPVGIRPVLSKYRVEVLFWGLRDLKRVNLAQVDRPRVDIECAGKGVQSSLIHNYKKNPNFNTLVKWFEVDLPENELLHPPLNIRVVDCRAFGRYTLVGSHAVSSLRRFIYRPPDRSAANWNTTGEVVVSMEPEVPVKKLETLVKLDATSDAVVKVDVAEDEKERKKKKKKGPSEEAEEEEPDESMLDWWSKYFASIDTMKEQLRQHETSGIDLEEKEEMDSTEGLKGPVKNKEKSRAAKEEKKKKNQNPGPGQGSEAPEKKKAKIDELKVYPKELESEFDNFEDWLHTFNLLRGKTGDDEDGSTEEERIVGRFKGSLCVYKVPLPEDVSREAGYDPTYGMFQGIPSNDPINVLVRIYVVRATDLHPADINGKADPYIAIKLGKTDIRDKENYISKQLNPVFGKSFDIEASFPMESMLTVAVYDWDLVGTDDLIGETKIDLENRFYSKHRATCGIAQTYSIHGYNIWRDPMKPSQILTRLCKEGKVDGPHFGPHGRVKVANRVFTGPSEIEDENGQRKPTDEHVALSALRHWEDIPRVGCRLVPEHVETRPLLNPDKPGIEQGRLELWVDMFPMDMPAPGTPLDISPRKPKKYELRVIVWNTDEVVLEDDDFFTGEKSSDIFVRGWLKGQQEDKQDTDVHYHSLTGEGNFNWRYLFPFDYLAAEEKIVMSKKESMFSWDETEYKIPARLTLQIWDADHFSADDFLGAIELDLNRFPRGAKTAKQCTMEMATGEVDVPLVSIFKQKRVKGWWPLLARNENDEFELTGKVEAELHLLTAEEAEKNPVGLARNEPDPLEKPNRPDTAFVWFLNPLKSIKYLICTRYKWLIIKIVLALLGLLMLALFLYSLPGYMVKKLLGA.

The C2 1 domain maps to 1-98; that stretch reads MALIVHLKTV…VEENRVEVSD (98 aa). At 1–1959 the chain is on the cytoplasmic side; sequence MALIVHLKTV…IKYLICTRYK (1959 aa). Positions 127 to 212 are disordered; that stretch reads PWDDGDFLGD…KEEPQRQDEP (86 aa). Residues 129–145 show a composition bias toward acidic residues; it reads DDGDFLGDESLQEEEKD. Composition is skewed to basic and acidic residues over residues 163–186 and 202–211; these read PGEK…EHKA and HKEEPQRQDE. C2 domains lie at 251–372 and 415–546; these read KRSK…HKWA and IEGN…FLPT. The interval 654–708 is disordered; the sequence is NYGNEVDGTSRPQRPRPRKEPGDEEEVDLIQNSSDDEGDEAGDLASVSSTPPMRP. Over residues 675–695 the composition is skewed to acidic residues; the sequence is GDEEEVDLIQNSSDDEGDEAG. Positions 807-836 form a coiled coil; it reads RERLKSCMRELESMGQQAKSLRAQVKRHTV. 2 consecutive C2 domains span residues 959-1084 and 1131-1257; these read LHSF…PPRF and RGPI…ANWN. Residues aspartate 991, aspartate 997, aspartate 1053, aspartate 1055, and aspartate 1061 each coordinate Ca(2+). Disordered stretches follow at residues 1294-1318 and 1339-1398; these read AEDE…EEPD and LRQH…EKKK. Residues 1348–1357 show a composition bias toward acidic residues; sequence DLEEKEEMDS. A compositionally biased stretch (basic and acidic residues) spans 1366–1379; the sequence is KNKEKSRAAKEEKK. C2 domains lie at 1460-1589 and 1710-1861; these read LPED…ATCG and DMPA…KQCT. Ca(2+)-binding residues include aspartate 1504, aspartate 1510, aspartate 1559, aspartate 1561, aspartate 1567, aspartate 1832, serine 1835, and aspartate 1838. Residues 1960-1980 traverse the membrane as a helical segment; the sequence is WLIIKIVLALLGLLMLALFLY. Over 1981-1993 the chain is Extracellular; the sequence is SLPGYMVKKLLGA.

This sequence belongs to the ferlin family. As to quaternary structure, interacts with SNAP25; the interaction is direct. Interacts with STX1; the interaction is direct. Interacts with RAB8B. It depends on Ca(2+) as a cofactor. In terms of tissue distribution, isoform 1 is expressed in the cochlea and brain. Expressed in cerebellum (Purkinje cells), hippocampus (granule cells of the dentate gyrus and in pyramidal cells of the CA1-CA3 region) and cortex (stellate and pyramidal cells). Expressed in hair cells of vestibular organs such as the saccule, utricle and crista ampullari. Expressed in the cochlear inner and outer cells (IHCs and OHCs) (at protein level). Expressed in brain: brainstem, cerebellum (granules cells and Purkinje cell layer), cortex (layers IV and V), inferior colliculus, superior colliculus and hippocampus (granule cells of the dentate gyrus and in pyramidal cells of the CA1-CA3 region).

It localises to the cytoplasmic vesicle. It is found in the secretory vesicle. The protein resides in the synaptic vesicle membrane. Its subcellular location is the basolateral cell membrane. The protein localises to the endoplasmic reticulum membrane. It localises to the golgi apparatus membrane. It is found in the presynaptic cell membrane. The protein resides in the cell membrane. Its function is as follows. Key calcium ion sensor involved in the Ca(2+)-triggered synaptic vesicle-plasma membrane fusion and in the control of neurotransmitter release at these output synapses. Interacts in a calcium-dependent manner to the presynaptic SNARE proteins at ribbon synapses of cochlear inner hair cells (IHCs) to trigger exocytosis of neurotransmitter. Also essential to synaptic exocytosis in immature outer hair cells (OHCs). May also play a role within the recycling of endosomes. This is Otoferlin (Otof) from Rattus norvegicus (Rat).